The primary structure comprises 153 residues: Lipoprotein signal peptidase (153 aa).

A run of 3 helical transmembrane segments spans residues 7-27, 59-79, and 93-113; these read LIIISIFLIDFFTKKWILNNY, NLIRILIIVISIFILLFIFYM, and SIIIGGSFGNIFDRIFYGSVI. Catalysis depends on residues aspartate 114 and aspartate 132. A helical membrane pass occupies residues 123–143; that stretch reads WHFPVFNFADISIFIGFLILI.

The protein belongs to the peptidase A8 family.

It is found in the cell membrane. It carries out the reaction Release of signal peptides from bacterial membrane prolipoproteins. Hydrolyzes -Xaa-Yaa-Zaa-|-(S,diacylglyceryl)Cys-, in which Xaa is hydrophobic (preferably Leu), and Yaa (Ala or Ser) and Zaa (Gly or Ala) have small, neutral side chains.. It functions in the pathway protein modification; lipoprotein biosynthesis (signal peptide cleavage). In terms of biological role, this protein specifically catalyzes the removal of signal peptides from prolipoproteins. The protein is Lipoprotein signal peptidase of Wigglesworthia glossinidia brevipalpis.